The chain runs to 144 residues: Putative protein PHLOEM PROTEIN 2-LIKE B4 (144 aa).

In Arabidopsis thaliana (Mouse-ear cress), this protein is Putative protein PHLOEM PROTEIN 2-LIKE B4 (PP2B4).